We begin with the raw amino-acid sequence, 215 residues long: Probable glutathione S-transferase GSTF2 (215 aa).

Residues 2-83 (APMKLYGSTL…YVCRKNKPEL (82 aa)) enclose the GST N-terminal domain. Glutathione contacts are provided by residues Ser12, 41-42 (HK), 54-55 (QV), and 67-68 (ES). The GST C-terminal domain maps to 88–215 (DLKESAMVDV…KVASLMKPPA (128 aa)).

Belongs to the GST superfamily. Phi family. As to expression, constitutively expressed in roots. Expressed in anthers, callus, panicles, sheaths and stems (at protein level).

It catalyses the reaction RX + glutathione = an S-substituted glutathione + a halide anion + H(+). In terms of biological role, conjugation of reduced glutathione to a wide number of exogenous and endogenous hydrophobic electrophiles. The protein is Probable glutathione S-transferase GSTF2 (GSTF2) of Oryza sativa subsp. japonica (Rice).